We begin with the raw amino-acid sequence, 149 residues long: Transcription antitermination protein NusB (149 aa).

The protein belongs to the NusB family.

Involved in transcription antitermination. Required for transcription of ribosomal RNA (rRNA) genes. Binds specifically to the boxA antiterminator sequence of the ribosomal RNA (rrn) operons. This Caulobacter vibrioides (strain ATCC 19089 / CIP 103742 / CB 15) (Caulobacter crescentus) protein is Transcription antitermination protein NusB.